The following is a 222-amino-acid chain: Phosphoribosylformylglycinamidine synthase subunit PurQ (222 aa).

The region spanning 3-222 is the Glutamine amidotransferase type-1 domain; that stretch reads AAVLVFPGSN…ASLAAALVAA (220 aa). Cys86 (nucleophile) is an active-site residue. Catalysis depends on residues His194 and Glu196.

As to quaternary structure, part of the FGAM synthase complex composed of 1 PurL, 1 PurQ and 2 PurS subunits.

The protein resides in the cytoplasm. The enzyme catalyses N(2)-formyl-N(1)-(5-phospho-beta-D-ribosyl)glycinamide + L-glutamine + ATP + H2O = 2-formamido-N(1)-(5-O-phospho-beta-D-ribosyl)acetamidine + L-glutamate + ADP + phosphate + H(+). It carries out the reaction L-glutamine + H2O = L-glutamate + NH4(+). It participates in purine metabolism; IMP biosynthesis via de novo pathway; 5-amino-1-(5-phospho-D-ribosyl)imidazole from N(2)-formyl-N(1)-(5-phospho-D-ribosyl)glycinamide: step 1/2. Its function is as follows. Part of the phosphoribosylformylglycinamidine synthase complex involved in the purines biosynthetic pathway. Catalyzes the ATP-dependent conversion of formylglycinamide ribonucleotide (FGAR) and glutamine to yield formylglycinamidine ribonucleotide (FGAM) and glutamate. The FGAM synthase complex is composed of three subunits. PurQ produces an ammonia molecule by converting glutamine to glutamate. PurL transfers the ammonia molecule to FGAR to form FGAM in an ATP-dependent manner. PurS interacts with PurQ and PurL and is thought to assist in the transfer of the ammonia molecule from PurQ to PurL. The chain is Phosphoribosylformylglycinamidine synthase subunit PurQ from Jannaschia sp. (strain CCS1).